The sequence spans 65 residues: uncharacterized protein (65 aa).

Cys-9 (nucleophile) is an active-site residue. Arg-15 is a catalytic residue.

It belongs to the low molecular weight phosphotyrosine protein phosphatase family.

This is an uncharacterized protein from Synechococcus sp. (strain WH8020).